The sequence spans 128 residues: Small ribosomal subunit protein uS11 (128 aa).

This sequence belongs to the universal ribosomal protein uS11 family. As to quaternary structure, part of the 30S ribosomal subunit. Interacts with proteins S7 and S18. Binds to IF-3.

Located on the platform of the 30S subunit, it bridges several disparate RNA helices of the 16S rRNA. Forms part of the Shine-Dalgarno cleft in the 70S ribosome. The chain is Small ribosomal subunit protein uS11 from Chloroherpeton thalassium (strain ATCC 35110 / GB-78).